Reading from the N-terminus, the 210-residue chain is Regulator of G-protein signaling 17 (210 aa).

Residues 1-21 form a disordered region; sequence MRKRQQSQNEGTQAVSQAPGN. An RGS domain is found at 84–200; sequence NFDKMMKTPA…LNSQIYKAFV (117 aa). Tyrosine 137 is modified (phosphotyrosine).

Interacts with GNAI1 and GNAQ. Interacts with GNAZ and GNAI2. Interacts with OPRM1. Forms a complex with mu-opioid receptors and G(alpha)z/i2 subunits, including GNAZ and GNAI2; the formation of this complex results in mu-opioid receptor desensitization. Interacts with HINT1. In terms of processing, N- and O-glycosylated in synapsomal membranes. Post-translationally, serine phosphorylated in synapsomal membranes. Sumoylated with SUMO1 and SUM02 in synaptosomes. The sumoylated forms act as a scaffold for sequestering mu-opioid receptor-activated G(alpha) subunits. Desumoylated by HINT1. Detected in brain (at protein level). Highly expressed in the hypothalamus, periaqueductal gray matter, and pons-medulla. Lower levels in the thalamus, cortex and spinal cord. Weak expression in the striatum and cerebellum.

It is found in the membrane. It localises to the synapse. The protein resides in the synaptosome. Its subcellular location is the nucleus. The protein localises to the cytoplasm. In terms of biological role, regulates G protein-coupled receptor signaling cascades, including signaling via muscarinic acetylcholine receptor CHRM2 and dopamine receptor DRD2. Inhibits signal transduction by increasing the GTPase activity of G protein alpha subunits, thereby driving them into their inactive GDP-bound form. Binds selectively to GNAZ and GNAI2 subunits, accelerates their GTPase activity and regulates their signaling activities. Negatively regulates mu-opioid receptor-mediated activation of the G-proteins. The chain is Regulator of G-protein signaling 17 (Rgs17) from Mus musculus (Mouse).